The sequence spans 764 residues: Probable glutamate--tRNA ligase, cytoplasmic (764 aa).

228 to 230 contacts L-glutamate; the sequence is RFP. Residues 233–242 carry the 'HIGH' region motif; it reads PSGYMHIGHC. Residue His238 participates in ATP binding. Residues Asp264, 404–408, and Arg422 each bind L-glutamate; that span reads YDFAC. Residues Glu425 and 460–464 contribute to the ATP site; that span reads LLSKR. A 'KMSKS' region motif is present at residues 460–464; it reads LLSKR.

This sequence belongs to the class-I aminoacyl-tRNA synthetase family. Glutamate--tRNA ligase type 2 subfamily.

It localises to the cytoplasm. The catalysed reaction is tRNA(Glu) + L-glutamate + ATP = L-glutamyl-tRNA(Glu) + AMP + diphosphate. Catalyzes the attachment of glutamate to tRNA(Glu) in a two-step reaction: glutamate is first activated by ATP to form Glu-AMP and then transferred to the acceptor end of tRNA(Glu). This chain is Probable glutamate--tRNA ligase, cytoplasmic (gluS), found in Dictyostelium discoideum (Social amoeba).